Reading from the N-terminus, the 733-residue chain is Exosome complex exonuclease RRP6 (733 aa).

Phosphoserine is present on Ser-138. The 3'-5' exonuclease domain maps to 214–380 (IWVDTSTELE…NIYDQLRNKL (167 aa)). Positions 238 and 240 each coordinate Mn(2+). Zn(2+) contacts are provided by Asp-238 and Glu-240. Glu-240 and His-241 together coordinate AMP. Residues Glu-240 and His-241 each contribute to the UMP site. Residue Asp-296 participates in Mn(2+) binding. AMP contacts are provided by Trp-299, Lys-342, and Gln-345. Residues Trp-299, Lys-342, and Gln-345 each coordinate UMP. A Mn(2+)-binding site is contributed by Asp-365. Position 365 (Asp-365) interacts with Zn(2+). The 81-residue stretch at 435–515 (PPEREVLVRE…RDALRNIKNT (81 aa)) folds into the HRDC domain. The residue at position 520 (Thr-520) is a Phosphothreonine. Ser-640 and Ser-645 each carry phosphoserine. The tract at residues 662-733 (IQKKQPAKEK…AKGKNLSFKR (72 aa)) is disordered. The segment covering 667–680 (PAKEKGVTEKDAVD) has biased composition (basic and acidic residues). Positions 687-697 (ILSNKPGQNNR) are enriched in polar residues. Short sequence motifs (nuclear localization signal) lie at residues 700-704 (KKRRF) and 718-721 (KKRR). Residues 716–733 (AAKKRRPAAKGKNLSFKR) show a composition bias toward basic residues.

This sequence belongs to the exosome component 10/RRP6 family. As to quaternary structure, component of the RNA exosome complex. Specifically part of the catalytically inactive RNA exosome core complex (Exo-9) which may associate with the catalytic subunits RRP6 and DIS3 in cytoplasmic- and nuclear-specific RNA exosome complex forms. Exo-9 is formed by a hexameric base ring of RNase PH domain-containing subunits and a cap ring consisting of CSL4, RRP4 and RRP40. RRP6 specifically is part of the nuclear form of the RNA exosome complex; the association appears to be mediated by Exo-9 and not by DIS3. Interacts with LRP1. Interacts with NPL3, NOP53 and PAP1.

It localises to the nucleus. The protein resides in the nucleolus. Functionally, nuclear-specific catalytic component of the RNA exosome complex which has 3'-&gt;5' exoribonuclease activity and participates in a multitude of cellular RNA processing and degradation events. In the nucleus, the RNA exosome complex is involved in proper maturation of stable RNA species such as rRNA, snRNA and snoRNA, in the elimination of RNA processing by-products and non-coding 'pervasive' transcripts, such as antisense RNA species and cryptic unstable transcripts (CUTs), and of mRNAs with processing defects, thereby limiting or excluding their export to the cytoplasm. The catalytic inactive RNA exosome core complex of 9 subunits (Exo-9) is proposed to play a pivotal role in the binding and presentation of RNA for ribonucleolysis, and to serve as a scaffold for the association with catalytic subunits and accessory proteins or complexes. RRP6 has 3'-5' exonuclease activity which is not modulated upon association with Exo-9 suggesting that the complex inner RNA-binding path is not used to access its active site. This Saccharomyces cerevisiae (strain ATCC 204508 / S288c) (Baker's yeast) protein is Exosome complex exonuclease RRP6 (RRP6).